The primary structure comprises 138 residues: Transcription antitermination protein NusB (138 aa).

The protein belongs to the NusB family.

Involved in transcription antitermination. Required for transcription of ribosomal RNA (rRNA) genes. Binds specifically to the boxA antiterminator sequence of the ribosomal RNA (rrn) operons. The protein is Transcription antitermination protein NusB of Helicobacter pylori (strain J99 / ATCC 700824) (Campylobacter pylori J99).